The following is a 474-amino-acid chain: MSRLVVVSNRIAPPDEHAASAGGLAVGILGALKAAGGLWFGWSGETGNEDQPLKKVKKGNITWASFNLSEQDLDEYYNQFSNAVLWPAFHYRLDLVQFQRPAWDGYLRVNALLADKLLPLLQDDDIIWIHDYHLLPFAHELRKRGVNNRIGFFLHIPFPTPEIFNALPTYDTLLEQLCDYDLLGFQTENDRLAFLDCLSNLTRVTTRSAKSHTAWGKAFRTEVYPIGIEPKEIAKQAAGPLPPKLAQLKAELKNVQNIFSVERLDYSKGLPERFLAYEVLLEKYPQHHGKIRYTQIAPTSRGDVQAYQDIRHQLENEAGRINGKYGQLGWTPLYYLNQHFDRKLLMKIFRYSDVGLVTPLRDGMNLVAKEYVAAQDPANPGVLVLSQFAGAANELTSALIVNPYDRDEVAAALDRALTMSLAERISRHAEMLDVIVKNDINHWQECFISDLKQIVPRSAESQQRDKVATFPKLA.

R10 provides a ligand contact to D-glucose 6-phosphate. UDP-alpha-D-glucose is bound at residue 22 to 23; that stretch reads GG. The D-glucose 6-phosphate site is built by Y77 and D131. 2 residues coordinate UDP-alpha-D-glucose: R263 and K268. R301 serves as a coordination point for D-glucose 6-phosphate. UDP-alpha-D-glucose is bound by residues F340 and 366-370; that span reads LVAKE.

This sequence belongs to the glycosyltransferase 20 family. As to quaternary structure, homotetramer.

It carries out the reaction D-glucose 6-phosphate + UDP-alpha-D-glucose = alpha,alpha-trehalose 6-phosphate + UDP + H(+). It functions in the pathway glycan biosynthesis; trehalose biosynthesis. Probably involved in the osmoprotection via the biosynthesis of trehalose. Catalyzes the transfer of glucose from UDP-alpha-D-glucose (UDP-Glc) to D-glucose 6-phosphate (Glc-6-P) to form trehalose-6-phosphate. Acts with retention of the anomeric configuration of the UDP-sugar donor. This Escherichia coli O9:H4 (strain HS) protein is Trehalose-6-phosphate synthase.